The sequence spans 605 residues: DNA primase (605 aa).

A CHC2-type zinc finger spans residues 39–63 (CPFHHERTPSFHVVPDKKMYYCFGC). The 82-residue stretch at 257–338 (RAAIICEGYM…EVRIVELNGG (82 aa)) folds into the Toprim domain. The Mg(2+) site is built by Glu263, Asp307, and Asp309.

It belongs to the DnaG primase family. In terms of assembly, monomer. Interacts with DnaB. Requires Zn(2+) as cofactor. The cofactor is Mg(2+).

It carries out the reaction ssDNA + n NTP = ssDNA/pppN(pN)n-1 hybrid + (n-1) diphosphate.. Its function is as follows. RNA polymerase that catalyzes the synthesis of short RNA molecules used as primers for DNA polymerase during DNA replication. The chain is DNA primase from Treponema pallidum (strain Nichols).